The sequence spans 725 residues: Ribonuclease R (725 aa).

The RNB domain occupies 236–559; the sequence is RKDLRDKLII…QLHRLIKQMV (324 aa). The S1 motif domain occupies 611 to 689; it reads GKSLKAQIVS…NLGKVDVVLE (79 aa).

This sequence belongs to the RNR ribonuclease family. RNase R subfamily.

It localises to the cytoplasm. It catalyses the reaction Exonucleolytic cleavage in the 3'- to 5'-direction to yield nucleoside 5'-phosphates.. Functionally, 3'-5' exoribonuclease that releases 5'-nucleoside monophosphates and is involved in maturation of structured RNAs. This Mycoplasmopsis pulmonis (strain UAB CTIP) (Mycoplasma pulmonis) protein is Ribonuclease R.